The following is a 624-amino-acid chain: MPRPRPLLLAVMAATLADIILAADPAPAGPAPRPPNFLLIMADDLGIGDLGCYGNKTLRTPHLDRLAREGVKLTQHLAAAPLCTPSRAAFLTGRYPPRSGMAAHGRVGVYLFTASSGGLPPSEVTMARLLKGRGYATALIGKWHLGLSCRGATDFCHHPLRHGFDRFLGVPTTNLRDCRPGAGTVFGPALRVFAAGPLAALGASLAAMAAARWAGLARVPGWALAGTAAAMLAVGGPRSASCLGFRPANCFLMDDLAVAQRPTDYGGLTRRLADEAALFLRRNRARPFLLFLSFLHVHTAHFADPGFAGRSLHGAYGDSVEEMDWGVGRVLAALDELGLARETLVYFTSDHGAHVEELGPRGERMGGSNGVFRGGKGNNWEGGVRVPCLVRWPRELSPGRVVAEPTSLMDVFPTVARLAGAELPGDRVIDGRDLMPLLRGDAQRSEHEFLFHYCNAYLQAVRWHNGSAVWKAFYFTPNFAPAGANGCFSTHVCLCAGPAHVTAHDPPLLFDLTRDPGERRPLTPEAEPRHREVLDAIDAAARAHRARLRPAPDQLAPRHLMWKPWLQLWGGGGAGGGAGAQDDSGHAHGDGSHAHDDPGHAQDRGDDDAHYGGHATTRTQATPR.

A signal peptide spans 1-22; sequence MPRPRPLLLAVMAATLADIILA. Residues 24–192 lie on the Lumenal side of the membrane; it reads DPAPAGPAPR…GTVFGPALRV (169 aa). The Ca(2+) site is built by D43 and D44. N55 is a glycosylation site (N-linked (GlcNAc...) asparagine). C83 provides a ligand contact to Ca(2+). C83 (nucleophile) is an active-site residue. 3-oxoalanine (Cys) is present on C83. H144 is an active-site residue. 2 disulfide bridges follow: C149–C156 and C178–C250. Residues 193–216 form a helical membrane-spanning segment; sequence FAAGPLAALGASLAAMAAARWAGL. Over 217–220 the chain is Cytoplasmic; it reads ARVP. A helical transmembrane segment spans residues 221 to 242; sequence GWALAGTAAAMLAVGGPRSASC. Residues 243–624 lie on the Lumenal side of the membrane; sequence LGFRPANCFL…ATTRTQATPR (382 aa). Positions 350 and 351 each coordinate Ca(2+). 2 disulfide bridges follow: C454–C495 and C487–C493. An N-linked (GlcNAc...) asparagine glycan is attached at N465. Residues 572-624 form a disordered region; sequence GGAGGGAGAQDDSGHAHGDGSHAHDDPGHAQDRGDDDAHYGGHATTRTQATPR. Positions 583 to 611 are enriched in basic and acidic residues; that stretch reads DSGHAHGDGSHAHDDPGHAQDRGDDDAHY.

This sequence belongs to the sulfatase family. Homodimer. Ca(2+) is required as a cofactor. In terms of processing, the conversion to 3-oxoalanine (also known as C-formylglycine, FGly), of a serine or cysteine residue in prokaryotes and of a cysteine residue in eukaryotes, is critical for catalytic activity.

The protein localises to the microsome membrane. It localises to the endoplasmic reticulum membrane. It catalyses the reaction dehydroepiandrosterone 3-sulfate + H2O = 3beta-hydroxyandrost-5-en-17-one + sulfate + H(+). The enzyme catalyses estrone 3-sulfate + H2O = estrone + sulfate + H(+). Catalyzes the conversion of sulfated steroid precursors, such as dehydroepiandrosterone sulfate (DHEA-S) and estrone sulfate to the free steroid. This Mus musculus (Mouse) protein is Steryl-sulfatase (Sts).